Reading from the N-terminus, the 433-residue chain is Serine hydroxymethyltransferase (433 aa).

(6S)-5,6,7,8-tetrahydrofolate-binding positions include Leu132 and 136–138 (GHL). Lys241 carries the post-translational modification N6-(pyridoxal phosphate)lysine.

It belongs to the SHMT family. Homodimer. Pyridoxal 5'-phosphate is required as a cofactor.

Its subcellular location is the cytoplasm. The enzyme catalyses (6R)-5,10-methylene-5,6,7,8-tetrahydrofolate + glycine + H2O = (6S)-5,6,7,8-tetrahydrofolate + L-serine. The protein operates within one-carbon metabolism; tetrahydrofolate interconversion. It functions in the pathway amino-acid biosynthesis; glycine biosynthesis; glycine from L-serine: step 1/1. Its function is as follows. Catalyzes the reversible interconversion of serine and glycine with tetrahydrofolate (THF) serving as the one-carbon carrier. This reaction serves as the major source of one-carbon groups required for the biosynthesis of purines, thymidylate, methionine, and other important biomolecules. Also exhibits THF-independent aldolase activity toward beta-hydroxyamino acids, producing glycine and aldehydes, via a retro-aldol mechanism. This Rhodopseudomonas palustris (strain HaA2) protein is Serine hydroxymethyltransferase.